Consider the following 366-residue polypeptide: Peroxisomal (S)-2-hydroxy-acid oxidase GLO4 (366 aa).

Residues 1–360 (MEDNLPVNVR…TRSHVMTEGD (360 aa)) form the FMN hydroxy acid dehydrogenase domain. Position 27 (Tyr-27) interacts with a 2-oxocarboxylate. FMN is bound by residues 80-82 (PTG), Ser-109, 130-132 (QLY), and Thr-158. Tyr-132 lines the a 2-oxocarboxylate pocket. Arg-167 contributes to the a 2-oxocarboxylate binding site. 2 residues coordinate FMN: Lys-231 and Ser-253. Residue His-255 is the Proton acceptor of the active site. Arg-258 is an a 2-oxocarboxylate binding site. FMN-binding positions include 286 to 290 (DGGIR) and 309 to 310 (XX). Positions 364 to 366 (SLL) match the Microbody targeting signal motif.

It belongs to the FMN-dependent alpha-hydroxy acid dehydrogenase family. Homotetramer. It depends on FMN as a cofactor.

The protein localises to the peroxisome. The catalysed reaction is a (2S)-2-hydroxycarboxylate + O2 = a 2-oxocarboxylate + H2O2. It functions in the pathway lipid metabolism; fatty acid metabolism. Oxidase that catalyzes the oxidation of a broad range of 2-hydroxyacids to the corresponding 2-oxoacids, with a reduction of O2 to H2O2. May be involved in a general medium- and long-chain fatty acid catabolic pathway such as alpha-oxidation. The chain is Peroxisomal (S)-2-hydroxy-acid oxidase GLO4 (GLO4) from Oryza sativa subsp. indica (Rice).